Here is a 322-residue protein sequence, read N- to C-terminus: Pantothenate kinase (322 aa).

100–107 contributes to the ATP binding site; that stretch reads GSVAVGKS.

This sequence belongs to the prokaryotic pantothenate kinase family.

It is found in the cytoplasm. It catalyses the reaction (R)-pantothenate + ATP = (R)-4'-phosphopantothenate + ADP + H(+). The protein operates within cofactor biosynthesis; coenzyme A biosynthesis; CoA from (R)-pantothenate: step 1/5. The chain is Pantothenate kinase from Agrobacterium fabrum (strain C58 / ATCC 33970) (Agrobacterium tumefaciens (strain C58)).